A 375-amino-acid polypeptide reads, in one-letter code: Deoxyhypusine synthase-like protein (375 aa).

Belongs to the deoxyhypusine synthase family.

The chain is Deoxyhypusine synthase-like protein from Elusimicrobium minutum (strain Pei191).